The following is a 4307-amino-acid chain: Cytoplasmic dynein 2 heavy chain 1 (4307 aa).

The segment at 1–1650 is stem; that stretch reads MANGTADVRK…CVQMVDSEFQ (1650 aa). ATP is bound at residue 145–152; the sequence is LGIVLRRS. Residues 1074-1103 are a coiled coil; it reads NTLDKSAKLIKEKKIEFDDLEVTRKKLVDD. AAA regions lie at residues 1651–1875, 1938–2161, 2251–2505, and 2617–2863; these read YTYE…VLRG, ELSA…KQND, ADDF…WVLG, and HYGR…ESCK. ATP-binding positions include 1689 to 1696, 1979 to 1986, 2291 to 2298, and 2655 to 2662; these read GPAGTGKT, GPSGAGKS, GPEGCGKG, and GRSGVGRR. Positions 2881–3169 are stalk; sequence AISSSKKKEL…AEVSKAQETI (289 aa). Coiled-coil stretches lie at residues 2897–2982, 3109–3200, and 3408–3442; these read LQAG…KEVQ, LETE…LATL, and IQHE…SLLE. AAA regions lie at residues 3244–3473 and 3690–3905; these read LCTE…LIQE and MALF…IIDR.

It belongs to the dynein heavy chain family. In terms of assembly, the cytoplasmic dynein complex 2 is probably composed by a heavy chain DYNC2H1 homodimer and a number of DYNC2LI1 light intermediate chains.

It localises to the cytoplasm. The protein localises to the cytoskeleton. It is found in the cilium axoneme. Its subcellular location is the cell membrane. In terms of biological role, may function as a motor for intraflagellar retrograde transport. Functions in cilia biogenesis. May play a role in transport between endoplasmic reticulum and Golgi or organization of the Golgi in cells. This is Cytoplasmic dynein 2 heavy chain 1 (DYNC2H1) from Homo sapiens (Human).